The following is a 156-amino-acid chain: Putative pre-16S rRNA nuclease (156 aa).

Belongs to the YqgF nuclease family.

The protein resides in the cytoplasm. Could be a nuclease involved in processing of the 5'-end of pre-16S rRNA. In Ehrlichia ruminantium (strain Gardel), this protein is Putative pre-16S rRNA nuclease.